Reading from the N-terminus, the 278-residue chain is Large ribosomal subunit protein uL2 (278 aa).

The disordered stretch occupies residues glycine 222–threonine 264.

This sequence belongs to the universal ribosomal protein uL2 family. Part of the 50S ribosomal subunit. Forms a bridge to the 30S subunit in the 70S ribosome.

Its function is as follows. One of the primary rRNA binding proteins. Required for association of the 30S and 50S subunits to form the 70S ribosome, for tRNA binding and peptide bond formation. It has been suggested to have peptidyltransferase activity; this is somewhat controversial. Makes several contacts with the 16S rRNA in the 70S ribosome. The polypeptide is Large ribosomal subunit protein uL2 (Phenylobacterium zucineum (strain HLK1)).